The sequence spans 390 residues: tRNA(Met) cytidine acetate ligase (390 aa).

Residues 7 to 20, G101, N162, and R187 each bind ATP; that span reads VVEY…HKLH.

The protein belongs to the TmcAL family.

It is found in the cytoplasm. It carries out the reaction cytidine(34) in elongator tRNA(Met) + acetate + ATP = N(4)-acetylcytidine(34) in elongator tRNA(Met) + AMP + diphosphate. In terms of biological role, catalyzes the formation of N(4)-acetylcytidine (ac(4)C) at the wobble position of elongator tRNA(Met), using acetate and ATP as substrates. First activates an acetate ion to form acetyladenylate (Ac-AMP) and then transfers the acetyl group to tRNA to form ac(4)C34. This Listeria monocytogenes serotype 4a (strain HCC23) protein is tRNA(Met) cytidine acetate ligase.